Consider the following 392-residue polypeptide: Outer membrane protein assembly factor BamB (392 aa).

An N-terminal signal peptide occupies residues 1-19 (MQLRKLLLPGLLSVTLLSG). The N-palmitoyl cysteine moiety is linked to residue Cys-20. Cys-20 carries the S-diacylglycerol cysteine lipid modification.

This sequence belongs to the BamB family. In terms of assembly, part of the Bam complex, which is composed of the outer membrane protein BamA, and four lipoproteins BamB, BamC, BamD and BamE.

The protein resides in the cell outer membrane. Part of the outer membrane protein assembly complex, which is involved in assembly and insertion of beta-barrel proteins into the outer membrane. This chain is Outer membrane protein assembly factor BamB, found in Salmonella typhimurium (strain LT2 / SGSC1412 / ATCC 700720).